The primary structure comprises 231 residues: Large ribosomal subunit protein uL1 (231 aa).

The protein belongs to the universal ribosomal protein uL1 family. In terms of assembly, part of the 50S ribosomal subunit.

Functionally, binds directly to 23S rRNA. The L1 stalk is quite mobile in the ribosome, and is involved in E site tRNA release. Protein L1 is also a translational repressor protein, it controls the translation of the L11 operon by binding to its mRNA. This is Large ribosomal subunit protein uL1 from Carboxydothermus hydrogenoformans (strain ATCC BAA-161 / DSM 6008 / Z-2901).